A 275-amino-acid chain; its full sequence is 4-diphosphocytidyl-2-C-methyl-D-erythritol kinase (275 aa).

Residue Lys-9 is part of the active site. An ATP-binding site is contributed by 90-100 (PVGGGLGGGSS). The active site involves Asp-132.

Belongs to the GHMP kinase family. IspE subfamily.

The enzyme catalyses 4-CDP-2-C-methyl-D-erythritol + ATP = 4-CDP-2-C-methyl-D-erythritol 2-phosphate + ADP + H(+). It participates in isoprenoid biosynthesis; isopentenyl diphosphate biosynthesis via DXP pathway; isopentenyl diphosphate from 1-deoxy-D-xylulose 5-phosphate: step 3/6. Its function is as follows. Catalyzes the phosphorylation of the position 2 hydroxy group of 4-diphosphocytidyl-2C-methyl-D-erythritol. This chain is 4-diphosphocytidyl-2-C-methyl-D-erythritol kinase, found in Sulfurihydrogenibium sp. (strain YO3AOP1).